We begin with the raw amino-acid sequence, 262 residues long: Cytochrome c oxidase subunit 3 (262 aa).

A run of 6 helical transmembrane segments spans residues 39–59 (YTMT…YQWW), 83–103 (GMIL…WAFF), 120–140 (VGII…ILLA), 163–183 (GLFF…YEYI), 201–221 (ATGF…ICFL), and 240–260 (AWYW…IYWW).

The protein belongs to the cytochrome c oxidase subunit 3 family. In terms of assembly, component of the cytochrome c oxidase (complex IV, CIV), a multisubunit enzyme composed of a catalytic core of 3 subunits and several supernumerary subunits. The complex exists as a monomer or a dimer and forms supercomplexes (SCs) in the inner mitochondrial membrane with ubiquinol-cytochrome c oxidoreductase (cytochrome b-c1 complex, complex III, CIII).

Its subcellular location is the mitochondrion inner membrane. It carries out the reaction 4 Fe(II)-[cytochrome c] + O2 + 8 H(+)(in) = 4 Fe(III)-[cytochrome c] + 2 H2O + 4 H(+)(out). In terms of biological role, component of the cytochrome c oxidase, the last enzyme in the mitochondrial electron transport chain which drives oxidative phosphorylation. The respiratory chain contains 3 multisubunit complexes succinate dehydrogenase (complex II, CII), ubiquinol-cytochrome c oxidoreductase (cytochrome b-c1 complex, complex III, CIII) and cytochrome c oxidase (complex IV, CIV), that cooperate to transfer electrons derived from NADH and succinate to molecular oxygen, creating an electrochemical gradient over the inner membrane that drives transmembrane transport and the ATP synthase. Cytochrome c oxidase is the component of the respiratory chain that catalyzes the reduction of oxygen to water. Electrons originating from reduced cytochrome c in the intermembrane space (IMS) are transferred via the dinuclear copper A center (CU(A)) of subunit 2 and heme A of subunit 1 to the active site in subunit 1, a binuclear center (BNC) formed by heme A3 and copper B (CU(B)). The BNC reduces molecular oxygen to 2 water molecules using 4 electrons from cytochrome c in the IMS and 4 protons from the mitochondrial matrix. The sequence is that of Cytochrome c oxidase subunit 3 (COIII) from Anopheles quadrimaculatus (Common malaria mosquito).